Consider the following 293-residue polypeptide: Movement protein BC1 (293 aa).

It belongs to the begomovirus movement protein BC1 family. As to quaternary structure, binds to dimeric supercoiled plasmid DNA. Post-translationally, phosphorylated.

The protein resides in the host cell membrane. Its subcellular location is the host microsome membrane. The protein localises to the host endoplasmic reticulum membrane. In terms of biological role, transports viral genome to neighboring plant cells directly through plasmosdesmata, without any budding. The movement protein allows efficient cell to cell propagation, by bypassing the host cell wall barrier. Begomovirus genome is shuttled out of nucleus by Nuclear shuttle protein (NSP) and the movement protein transports the DNA-NSP complex to cell plasmodesmata and facilitates further movement across the cell wall. The chain is Movement protein BC1 from Macroptilium lathyroides (Lima bean).